Here is a 334-residue protein sequence, read N- to C-terminus: Glycerol-3-phosphate dehydrogenase [NAD(P)+] (334 aa).

NADPH contacts are provided by W14, R34, and K107. Sn-glycerol 3-phosphate-binding residues include K107 and G135. A139 provides a ligand contact to NADPH. The sn-glycerol 3-phosphate site is built by K190, D243, S253, R254, and N255. The Proton acceptor role is filled by K190. R254 contacts NADPH. The NADPH site is built by V272 and E273.

This sequence belongs to the NAD-dependent glycerol-3-phosphate dehydrogenase family.

It localises to the cytoplasm. The enzyme catalyses sn-glycerol 3-phosphate + NAD(+) = dihydroxyacetone phosphate + NADH + H(+). The catalysed reaction is sn-glycerol 3-phosphate + NADP(+) = dihydroxyacetone phosphate + NADPH + H(+). The protein operates within membrane lipid metabolism; glycerophospholipid metabolism. In terms of biological role, catalyzes the reduction of the glycolytic intermediate dihydroxyacetone phosphate (DHAP) to sn-glycerol 3-phosphate (G3P), the key precursor for phospholipid synthesis. The protein is Glycerol-3-phosphate dehydrogenase [NAD(P)+] of Neorickettsia sennetsu (strain ATCC VR-367 / Miyayama) (Ehrlichia sennetsu).